The sequence spans 140 residues: Ribonuclease P protein component (140 aa).

It belongs to the RnpA family. As to quaternary structure, consists of a catalytic RNA component (M1 or rnpB) and a protein subunit.

The catalysed reaction is Endonucleolytic cleavage of RNA, removing 5'-extranucleotides from tRNA precursor.. RNaseP catalyzes the removal of the 5'-leader sequence from pre-tRNA to produce the mature 5'-terminus. It can also cleave other RNA substrates such as 4.5S RNA. The protein component plays an auxiliary but essential role in vivo by binding to the 5'-leader sequence and broadening the substrate specificity of the ribozyme. The sequence is that of Ribonuclease P protein component from Ralstonia pickettii (strain 12J).